A 545-amino-acid polypeptide reads, in one-letter code: MVGEETSLRNRLSRSAENPEQDEAQKNLLDTHRNGHITMKQLIAKKRQLAAEAEELKPLFLKEVGCHFDDFVTNLIDKSASLDNGGCALTTFSILEEMKNNHRAKDLRAPPEQGKIFISRRSLLDELFEVDHIRTIYHMFIALLIIFILSTLVVDYIDEGRLVLEFSLLAYAFGQFPIVIWTWWAMFLSTLAIPYFLFQRWAHGYSKSSHPLIYSLIHGAFFLVFQLGILGFIPTYVVLAYTLPPASRFILILEQIRLVMKAHSYVRENVPRVLSAAKEKSSTVPVPTVNQYLYFLFAPTLIYRDSYPRTPTVRWGYVAMQFLQVFGCLFYVYYIFERLCAPLFRNIKQEPFSARVLVLCVFNSILPGVLMLFLSFFAFLHCWLNAFAEMLRFGDRMFYKDWWNSTSYSNYYRTWNVVVHDWLYYYVYKDLLWFFSKRFRPAAMLAVFALSAVVHEYALAVCLSYFYPVLFVLFMFFGMAFNFIVNDSRKRPVWNIMVRASLFLGHGVILCFYSQEWYARQRCPLKNPTFLDYVRPRTWTCRYVF.

N-acetylmethionine is present on Met-1. Residues 1–24 form a disordered region; the sequence is MVGEETSLRNRLSRSAENPEQDEA. The Cytoplasmic segment spans residues 1–133; that stretch reads MVGEETSLRN…LDELFEVDHI (133 aa). Ser-7 carries the post-translational modification Phosphoserine. The span at 9-18 shows a compositional bias: polar residues; that stretch reads RNRLSRSAEN. His-132 contributes to the cholesterol binding site. A helical transmembrane segment spans residues 134 to 155; the sequence is RTIYHMFIALLIIFILSTLVVD. The Lumenal segment spans residues 156 to 175; that stretch reads YIDEGRLVLEFSLLAYAFGQ. Residues 176–201 traverse the membrane as a helical segment; the sequence is FPIVIWTWWAMFLSTLAIPYFLFQRW. At 202 to 213 the chain is on the cytoplasmic side; that stretch reads AHGYSKSSHPLI. A helical membrane pass occupies residues 214–239; sequence YSLIHGAFFLVFQLGILGFIPTYVVL. At 240-247 the chain is on the lumenal side; sequence AYTLPPAS. The helical transmembrane segment at 248-271 threads the bilayer; the sequence is RFILILEQIRLVMKAHSYVRENVP. Residues 272-314 are Cytoplasmic-facing; that stretch reads RVLSAAKEKSSTVPVPTVNQYLYFLFAPTLIYRDSYPRTPTVR. The chain crosses the membrane as a helical span at residues 315 to 347; that stretch reads WGYVAMQFLQVFGCLFYVYYIFERLCAPLFRNI. Topologically, residues 348–364 are lumenal; it reads KQEPFSARVLVLCVFNS. A helical transmembrane segment spans residues 365–390; that stretch reads ILPGVLMLFLSFFAFLHCWLNAFAEM. Residues 391–438 are Cytoplasmic-facing; it reads LRFGDRMFYKDWWNSTSYSNYYRTWNVVVHDWLYYYVYKDLLWFFSKR. Positions 398–404 match the FYXDWWN motif motif; the sequence is FYKDWWN. Positions 410, 413, 416, 420, 428, and 451 each coordinate an acyl-CoA. Residues 439–463 form a helical membrane-spanning segment; it reads FRPAAMLAVFALSAVVHEYALAVCL. The active site involves His-455. At 464-469 the chain is on the lumenal side; it reads SYFYPV. Residues 470–485 traverse the membrane as a helical segment; it reads LFVLFMFFGMAFNFIV. Topologically, residues 486 to 491 are cytoplasmic; it reads NDSRKR. Residues 492–523 form a helical membrane-spanning segment; that stretch reads PVWNIMVRASLFLGHGVILCFYSQEWYARQRC. Cys-523 and Cys-541 are joined by a disulfide. Topologically, residues 524-545 are lumenal; that stretch reads PLKNPTFLDYVRPRTWTCRYVF.

This sequence belongs to the membrane-bound acyltransferase family. Sterol o-acyltransferase subfamily. As to quaternary structure, may form homo- or heterodimers. Interacts with UBIAD1.

It is found in the endoplasmic reticulum membrane. It catalyses the reaction a sterol + a long-chain fatty acyl-CoA = a long-chain 3-hydroxysterol ester + CoA. The enzyme catalyses cholesterol + an acyl-CoA = a cholesterol ester + CoA. The catalysed reaction is cholesterol + (9Z)-octadecenoyl-CoA = cholesteryl (9Z-octadecenoate) + CoA. It carries out the reaction cholesterol + hexadecanoyl-CoA = cholesteryl hexadecanoate + CoA. It catalyses the reaction octadecanoyl-CoA + cholesterol = cholesteryl octadecanoate + CoA. The enzyme catalyses (9Z,12Z)-octadecadienoyl-CoA + cholesterol = cholesteryl (9Z,12Z)-octadecadienoate + CoA. The catalysed reaction is (5Z,8Z,11Z,14Z)-eicosatetraenoyl-CoA + cholesterol = cholesteryl (5Z,8Z,11Z,14Z)-eicosatetraenoate + CoA. It carries out the reaction (9Z)-hexadecenoyl-CoA + cholesterol = cholesteryl (9Z)-hexadecenoate + CoA. It catalyses the reaction (11Z)-octadecenoyl-CoA + cholesterol = cholesteryl (11Z)-octadecenoate + CoA. The enzyme catalyses (7Z)-octadecenoyl-CoA + cholesterol = cholesteryl (7Z)-octadecenoate + CoA. In terms of biological role, catalyzes the formation of fatty acid-cholesterol esters, which are less soluble in membranes than cholesterol. Plays a role in lipoprotein assembly and dietary cholesterol absorption. Preferentially utilizes oleoyl-CoA ((9Z)-octadecenoyl-CoA) as substrate: shows a higher activity towards an acyl-CoA substrate with a double bond at the delta-9 position (9Z) than towards saturated acyl-CoA or an unsaturated acyl-CoA with a double bond at the delta-7 (7Z) or delta-11 (11Z) positions. The chain is Sterol O-acyltransferase 1 from Rattus norvegicus (Rat).